A 426-amino-acid polypeptide reads, in one-letter code: Histidine--tRNA ligase (426 aa).

This sequence belongs to the class-II aminoacyl-tRNA synthetase family.

The protein localises to the cytoplasm. It carries out the reaction tRNA(His) + L-histidine + ATP = L-histidyl-tRNA(His) + AMP + diphosphate + H(+). The sequence is that of Histidine--tRNA ligase from Saccharolobus islandicus (strain Y.N.15.51 / Yellowstone #2) (Sulfolobus islandicus).